Here is a 508-residue protein sequence, read N- to C-terminus: General transcription factor IIF subunit 1 (508 aa).

N-acetylalanine is present on Ala-2. Thr-156 is modified (phosphothreonine). Residues 177–446 form a disordered region; sequence MQQRRLKDQD…TPSSGDVQVT (270 aa). Phosphoserine is present on residues Ser-217, Ser-218, Ser-221, and Ser-224. Over residues 232-251 the composition is skewed to basic residues; sequence SKAKKKAPVTKAGRKKKKKK. Composition is skewed to acidic residues over residues 255-270 and 303-325; these read DEAF…EGQE and EQSE…EEEE. The residue at position 331 (Thr-331) is a Phosphothreonine. Residues 343-355 are compositionally biased toward acidic residues; the sequence is DDSDSSEESDIDS. A compositionally biased stretch (basic residues) spans 364–374; it reads AKKKTPPKRER. Ser-377, Ser-380, Ser-381, and Ser-385 each carry phosphoserine. The segment covering 378–388 has biased composition (polar residues); it reads GGSSKGTSRPG. Thr-389 carries the post-translational modification Phosphothreonine. Positions 389–406 are enriched in low complexity; the sequence is TPSAEAASTSSTLRAAAS. Position 391 is a phosphoserine (Ser-391). Lys-407 bears the N6-acetyllysine mark. Polar residues predominate over residues 428–443; that stretch reads GPQSLSGKSTPSSGDV. Ser-431, Ser-433, and Ser-436 each carry phosphoserine. Thr-437 bears the Phosphothreonine mark. The residue at position 440 (Ser-440) is a Phosphoserine.

It belongs to the TFIIF alpha subunit family. In terms of assembly, heterodimer of an alpha and a beta subunit. Interacts with GTF2F2, CTDP1, TAF6/TAFII80 and URI1. Interacts with GTF2B (via C-terminus and preferentially via acetylated form); this interaction prevents binding of GTF2B to GTF2F2. Part of TBP-based Pol II pre-initiation complex (PIC), in which Pol II core assembles with general transcription factors and other specific initiation factors including GTF2E1, GTF2E2, GTF2F1, GTF2F2, TCEA1, ERCC2, ERCC3, GTF2H2, GTF2H3, GTF2H4, GTF2H5, GTF2A1, GTF2A2, GTF2B and TBP; this large multi-subunit PIC complex mediates DNA unwinding and targets Pol II core to the transcription start site where the first phosphodiester bond forms. Post-translationally, phosphorylated on Ser and other residues by TAF1 and casein kinase II-like kinases.

Its subcellular location is the nucleus. In terms of biological role, TFIIF is a general transcription initiation factor that binds to RNA polymerase II and helps to recruit it to the initiation complex in collaboration with TFIIB. It promotes transcription elongation. This Mus musculus (Mouse) protein is General transcription factor IIF subunit 1 (Gtf2f1).